A 420-amino-acid chain; its full sequence is Glutamyl-tRNA reductase (420 aa).

Substrate is bound by residues 49–52 (TCNR), Ser109, 114–116 (EPQ), and Gln120. The active-site Nucleophile is Cys50. Position 189 to 194 (189 to 194 (GAGETI)) interacts with NADP(+).

Belongs to the glutamyl-tRNA reductase family. Homodimer.

It catalyses the reaction (S)-4-amino-5-oxopentanoate + tRNA(Glu) + NADP(+) = L-glutamyl-tRNA(Glu) + NADPH + H(+). It functions in the pathway porphyrin-containing compound metabolism; protoporphyrin-IX biosynthesis; 5-aminolevulinate from L-glutamyl-tRNA(Glu): step 1/2. Catalyzes the NADPH-dependent reduction of glutamyl-tRNA(Glu) to glutamate 1-semialdehyde (GSA). This is Glutamyl-tRNA reductase from Photorhabdus laumondii subsp. laumondii (strain DSM 15139 / CIP 105565 / TT01) (Photorhabdus luminescens subsp. laumondii).